A 200-amino-acid polypeptide reads, in one-letter code: Elongation factor Ts (200 aa).

Positions 83–86 (TDFA) are involved in Mg(2+) ion dislocation from EF-Tu.

The protein belongs to the EF-Ts family.

The protein localises to the cytoplasm. Functionally, associates with the EF-Tu.GDP complex and induces the exchange of GDP to GTP. It remains bound to the aminoacyl-tRNA.EF-Tu.GTP complex up to the GTP hydrolysis stage on the ribosome. This chain is Elongation factor Ts, found in Syntrophobacter fumaroxidans (strain DSM 10017 / MPOB).